A 256-amino-acid polypeptide reads, in one-letter code: Pimeloyl-[acyl-carrier protein] methyl ester esterase (256 aa).

In terms of domain architecture, AB hydrolase-1 spans 15–242 (HLVLLHGWGL…AAHAPFISHP (228 aa)). Residues Trp-22, 82–83 (SL), and 143–147 (FLALQ) each bind substrate. Residue Ser-82 is the Nucleophile of the active site. Catalysis depends on residues Asp-207 and His-235. His-235 contacts substrate.

It belongs to the AB hydrolase superfamily. Carboxylesterase BioH family. As to quaternary structure, monomer.

The protein localises to the cytoplasm. The catalysed reaction is 6-carboxyhexanoyl-[ACP] methyl ester + H2O = 6-carboxyhexanoyl-[ACP] + methanol + H(+). It functions in the pathway cofactor biosynthesis; biotin biosynthesis. The physiological role of BioH is to remove the methyl group introduced by BioC when the pimeloyl moiety is complete. It allows to synthesize pimeloyl-ACP via the fatty acid synthetic pathway through the hydrolysis of the ester bonds of pimeloyl-ACP esters. In Escherichia coli O45:K1 (strain S88 / ExPEC), this protein is Pimeloyl-[acyl-carrier protein] methyl ester esterase.